The primary structure comprises 195 residues: BH3-interacting domain death agonist (195 aa).

N-acetylmethionine is present on Met-1. Residues 58-69 are compositionally biased toward polar residues; the sequence is TDGSQASRSFNQ. The segment at 58–77 is disordered; the sequence is TDGSQASRSFNQGRIEPDSE. At Ser-78 the chain carries Phosphoserine. The BH3 signature appears at 87 to 100; the sequence is ARHLAQIGDEMDHN.

In terms of assembly, forms heterodimers either with the pro-apoptotic protein BAX or the anti-apoptotic protein BCL2. Interacts with PLEKHN1. Interacts with ITCH. Interacts with MTCH2. Post-translationally, TNF-alpha induces caspase-mediated cleavage into a major p15 and minor p13 and p11 products. Cleaved by CASP6 into a major p15 and minor p13 products, leading to release of cytochrome c and subsequent nonalcoholic steatohepatitis. In terms of processing, ubiquitinated by ITCH; ubiquitination results in proteasome-dependent degradation.

Its subcellular location is the cytoplasm. The protein localises to the mitochondrion membrane. It is found in the mitochondrion outer membrane. Induces caspases and apoptosis. Counters the protective effect of BCL2. Functionally, induces caspase activation and apoptosis. Allows the release of cytochrome c. The protein is BH3-interacting domain death agonist (Bid) of Mus musculus (Mouse).